A 1383-amino-acid polypeptide reads, in one-letter code: Periaxin (1383 aa).

A Phosphoserine modification is found at Ser-7. The PDZ domain occupies 16 to 99 (LVEIIVETEA…YKVSFCLKRT (84 aa)). The short motif at 70 to 84 (VFFENFKYEDALRLL) is the Nuclear export signal element. Residues Ser-133 and Ser-243 each carry the phosphoserine modification. 46 tandem repeats follow at residues 432-436 (GPEVK), 440-444 (GPEVK), 448-452 (VPEIK), 456-460 (APEAA), 461-465 (IPDVQ), 466-470 (LPEVQ), 474-478 (MSDMK), 482-486 (IPEMA), 487-491 (VPDVH), 492-496 (LPEVK), 497-501 (LPKVP), 502-506 (EMKVP), 507-511 (EMKLP), 515-519 (EMAVP), 523-527 (LPDIQ), 531-535 (VPEMK), 536-540 (LPDMK), 544-548 (VPEMA), 549-553 (VPDVH), 554-558 (LPDIQ), 562-566 (VPEMK), 567-571 (LPDMK), 575-579 (VPEMA), 580-584 (VPDVR), 585-589 (IPEVQ), 593-597 (VSEVK), 601-605 (IPDMA), 606-610 (VPDVR), 611-615 (LPELQ), 619-623 (MSEVK), 627-631 (IPDMA), 632-636 (VPDVR), 637-641 (LPEVQ), 645-649 (VSELK), 653-657 (VPEMT), 658-662 (MPDIR), 663-667 (LPEVQ), 671-675 (VPDIK), 676-680 (LPEIK), 684-688 (VPEMA), 689-693 (VPDVP), 694-698 (LPELQ), 699-703 (LPKVP), 705-709 (VPDVH), 713-717 (VPEMK), and 718-722 (LPKVP). The 46 X 5 AA approximate tandem repeats of [LVMGIE]-[PSM]-[EDKA]-[LIVMA]-[AQKHPRT]; that may have a tripeptide spacer of [ALKD]-[IPV]-[KPH] stretch occupies residues 432–722 (GPEVKAPKGP…VPEMKLPKVP (291 aa)). Phosphoserine occurs at positions 838, 971, 1020, 1271, 1275, 1277, 1285, 1323, and 1329. Residues 1251 to 1383 (KVKSPKLRLP…RIEGTQAAAI (133 aa)) form a disordered region. The segment covering 1267 to 1277 (SESASGEGSPS) has biased composition (low complexity). Residues 1346-1355 (GSKDREEGGF) show a composition bias toward basic and acidic residues. Ser-1361 is subject to Phosphoserine.

This sequence belongs to the periaxin family. As to quaternary structure, homodimer (via PDZ domain). Interacts with SCN10A. Found in a complex with SCN10A. Interacts with DRP2. Identified in a dystroglycan complex that contains at least PRX, DRP2, UTRN, DMD and DAG1. Detected in a complex composed of at least EZR, AHNAK, PPL and PRX. Identified in a complex with EZR, AHNAK, BFSP1, BFSP2, ANK2, PLEC, VIM and spectrin. In terms of processing, the N-terminus is blocked. As to expression, detected in sciatic nerve and in trigeminal nerve Schwann cells. Detected in myelinating Schwann cells in sciatic nerve (at protein level).

The protein localises to the nucleus. Its subcellular location is the cytoplasm. It is found in the cell membrane. It localises to the cell junction. Scaffolding protein that functions as part of a dystroglycan complex in Schwann cells, and as part of EZR and AHNAK-containing complexes in eye lens fiber cells. Required for the maintenance of the peripheral myelin sheath that is essential for normal transmission of nerve impulses and normal perception of sensory stimuli. Required for normal transport of MBP mRNA from the perinuclear to the paranodal regions. Required for normal remyelination after nerve injury. Required for normal elongation of Schwann cells and normal length of the internodes between the nodes of Ranvier. The demyelinated nodes of Ranvier permit saltatory transmission of nerve impulses; shorter internodes cause slower transmission of nerve impulses. Required for the formation of appositions between the abaxonal surface of the myelin sheath and the Schwann cell plasma membrane; the Schwann cell cytoplasm is restricted to regions between these appositions. Required for the formation of Cajal bands and of Schmidt-Lanterman incisures that correspond to short, cytoplasm-filled regions on myelinated nerves. Recruits DRP2 to the Schwann cell plasma membrane. Required for normal protein composition of the eye lens fiber cell plasma membrane and normal eye lens fiber cell morphology. The polypeptide is Periaxin (Prx) (Rattus norvegicus (Rat)).